The sequence spans 126 residues: Protein ApaG (126 aa).

In terms of domain architecture, ApaG spans 2–126; sequence ADKLYQMEVQ…MTLVAPRVLH (125 aa).

This Chromobacterium violaceum (strain ATCC 12472 / DSM 30191 / JCM 1249 / CCUG 213 / NBRC 12614 / NCIMB 9131 / NCTC 9757 / MK) protein is Protein ApaG.